The following is a 261-amino-acid chain: Shikimate dehydrogenase (NADP(+)) (261 aa).

Shikimate contacts are provided by residues 13–15 (SLS) and T60. Residue K64 is the Proton acceptor of the active site. NADP(+) is bound at residue E76. Shikimate contacts are provided by N85 and D100. NADP(+)-binding positions include 122 to 126 (GAGGA), 143 to 148 (NRTVER), and I203. Shikimate is bound at residue Y205. G226 lines the NADP(+) pocket.

The protein belongs to the shikimate dehydrogenase family. In terms of assembly, homodimer.

The catalysed reaction is shikimate + NADP(+) = 3-dehydroshikimate + NADPH + H(+). The protein operates within metabolic intermediate biosynthesis; chorismate biosynthesis; chorismate from D-erythrose 4-phosphate and phosphoenolpyruvate: step 4/7. Functionally, involved in the biosynthesis of the chorismate, which leads to the biosynthesis of aromatic amino acids. Catalyzes the reversible NADPH linked reduction of 3-dehydroshikimate (DHSA) to yield shikimate (SA). This chain is Shikimate dehydrogenase (NADP(+)), found in Exiguobacterium sp. (strain ATCC BAA-1283 / AT1b).